Consider the following 214-residue polypeptide: Holliday junction branch migration complex subunit RuvA (214 aa).

Residues 1–67 form a domain I region; the sequence is MVGWLKGLIV…ADNWQFFGFK (67 aa). Positions 68 to 146 are domain II; that stretch reads STQERDIFRE…AFAGMDPAPS (79 aa). The interval 147 to 154 is flexible linker; that stretch reads LAEGVSSE. Positions 155-214 are domain III; sequence QMPESGADVEATLSMLGYDDLEVRRAIRAIAEGSDGPPPPGDDQDAWLRGCLQWLSRDSA.

It belongs to the RuvA family. In terms of assembly, homotetramer. Forms an RuvA(8)-RuvB(12)-Holliday junction (HJ) complex. HJ DNA is sandwiched between 2 RuvA tetramers; dsDNA enters through RuvA and exits via RuvB. An RuvB hexamer assembles on each DNA strand where it exits the tetramer. Each RuvB hexamer is contacted by two RuvA subunits (via domain III) on 2 adjacent RuvB subunits; this complex drives branch migration. In the full resolvosome a probable DNA-RuvA(4)-RuvB(12)-RuvC(2) complex forms which resolves the HJ.

Its subcellular location is the cytoplasm. Its function is as follows. The RuvA-RuvB-RuvC complex processes Holliday junction (HJ) DNA during genetic recombination and DNA repair, while the RuvA-RuvB complex plays an important role in the rescue of blocked DNA replication forks via replication fork reversal (RFR). RuvA specifically binds to HJ cruciform DNA, conferring on it an open structure. The RuvB hexamer acts as an ATP-dependent pump, pulling dsDNA into and through the RuvAB complex. HJ branch migration allows RuvC to scan DNA until it finds its consensus sequence, where it cleaves and resolves the cruciform DNA. In Synechococcus sp. (strain CC9605), this protein is Holliday junction branch migration complex subunit RuvA.